We begin with the raw amino-acid sequence, 457 residues long: Multidrug resistance protein MdtK (457 aa).

12 helical membrane-spanning segments follow: residues 11-31 (LLAL…MGFV), 53-73 (IWLP…PVVA), 93-113 (WLAG…GYII), 127-147 (AVGY…FQVA), 160-180 (GMVM…IFIY), 191-211 (VGCG…MLWW), 243-263 (LPIA…ALLV), 276-296 (IALN…AAVT), 316-336 (RTGV…TVLM), 350-370 (VVLL…SDSI), 387-407 (IFFI…YLLA), and 418-438 (PAGF…MMML).

This sequence belongs to the multi antimicrobial extrusion (MATE) (TC 2.A.66.1) family. MdtK subfamily.

It localises to the cell inner membrane. Its function is as follows. Multidrug efflux pump that functions probably as a Na(+)/drug antiporter. The chain is Multidrug resistance protein MdtK from Klebsiella pneumoniae (strain 342).